We begin with the raw amino-acid sequence, 122 residues long: Selenoprotein H (122 aa).

The residue at position 20 (Lys20) is an N6-acetyllysine. Residues 41 to 44 (CTSU) constitute a cross-link (cysteinyl-selenocysteine (Cys-Sec); redox-active). Position 44 (Sec44) is a non-standard amino acid, selenocysteine.

It belongs to the SelWTH family.

May be involved in a redox-related process. The protein is Selenoprotein H of Homo sapiens (Human).